A 63-amino-acid chain; its full sequence is Large ribosomal subunit protein bL28 (63 aa).

Residues 11–20 are compositionally biased toward polar residues; sequence GNNSGASVSH. The tract at residues 11–30 is disordered; the sequence is GNNSGASVSHSNKKTKRKWK. The segment covering 21-30 has biased composition (basic residues); sequence SNKKTKRKWK.

The protein belongs to the bacterial ribosomal protein bL28 family.

The protein is Large ribosomal subunit protein bL28 of Natranaerobius thermophilus (strain ATCC BAA-1301 / DSM 18059 / JW/NM-WN-LF).